Here is a 428-residue protein sequence, read N- to C-terminus: Flotillin-2 (428 aa).

Gly-2 is lipidated: N-myristoyl glycine. Cys-4 carries the S-palmitoyl cysteine; by ZDHHC5 lipid modification. Cys-19 carries S-palmitoyl cysteine lipidation. Residue Cys-20 is the site of S-palmitoyl cysteine; by ZDHHC5 attachment. Ser-405 is subject to Phosphoserine.

Belongs to the band 7/mec-2 family. Flotillin subfamily. Heterooligomeric complex of flotillin-1 and flotillin-2 and caveolin-1 and caveolin-2. Interacts with ECPAS. ZDHHC5-catalyzed palmitoylation predominantly occurs at Cys-4. ZDHHC5-catalyzed palmitoylation may be required for the formation of higher-order complexes and for neurite outgrowth in cultured neural stem cells. As to expression, in skin, expressed in epidermis and epidermal appendages but not in dermis. Expressed in all layers of the epidermis except the basal layer. In hair follicles, expressed in the suprabasal layer but not the basal layer. Also expressed in melanoma and carcinoma cell lines, fibroblasts and foreskin melanocytes.

It is found in the cell membrane. It localises to the membrane. Its subcellular location is the caveola. The protein localises to the endosome. May act as a scaffolding protein within caveolar membranes, functionally participating in formation of caveolae or caveolae-like vesicles. May be involved in epidermal cell adhesion and epidermal structure and function. This chain is Flotillin-2 (FLOT2), found in Homo sapiens (Human).